Reading from the N-terminus, the 181-residue chain is Cell division protein SepF (181 aa).

Over residues 18 to 27 (EDYLDDDDYD) the composition is skewed to acidic residues. The tract at residues 18–42 (EDYLDDDDYDDGRAVGHDDRRAMHE) is disordered. Residues 28 to 42 (DGRAVGHDDRRAMHE) are compositionally biased toward basic and acidic residues.

The protein belongs to the SepF family. Homodimer. Interacts with FtsZ.

The protein localises to the cytoplasm. Functionally, cell division protein that is part of the divisome complex and is recruited early to the Z-ring. Probably stimulates Z-ring formation, perhaps through the cross-linking of FtsZ protofilaments. Its function overlaps with FtsA. This chain is Cell division protein SepF, found in Frankia alni (strain DSM 45986 / CECT 9034 / ACN14a).